Reading from the N-terminus, the 209-residue chain is Casparian strip membrane protein 1 (209 aa).

The Cytoplasmic segment spans residues 1–46 (MEKSESTKIDVVETNKERKGKAPLLGKAPVVAAAVVHAKGGGAKRG). The chain crosses the membrane as a helical span at residues 47 to 67 (IAIFDLILRIAAFASALGAAV). Residues 68 to 96 (AMATTEETLPFFTQFFQFEASYDDLPTFT) are Extracellular-facing. Residues 97–117 (FFVVAMAIVVAYLVLSVPFSI) form a helical membrane-spanning segment. The Cytoplasmic portion of the chain corresponds to 118–129 (VCIVRPHAVVPR). A helical transmembrane segment spans residues 130–150 (LLLIIFDTVIIALTTGAAGSS). The Extracellular segment spans residues 151–179 (AAIVYLAHNGNQDANWLAICQQFGDFCQR). The chain crosses the membrane as a helical span at residues 180–200 (VSGAVVAAFVTVVILIFLVVL). Residues 201–209 (SASALRRHH) lie on the Cytoplasmic side of the membrane.

It belongs to the Casparian strip membrane proteins (CASP) family. Homodimer and heterodimers.

It is found in the cell membrane. Regulates membrane-cell wall junctions and localized cell wall deposition. Required for establishment of the Casparian strip membrane domain (CSD) and the subsequent formation of Casparian strips, a cell wall modification of the root endodermis that determines an apoplastic barrier between the intraorganismal apoplasm and the extraorganismal apoplasm and prevents lateral diffusion. The sequence is that of Casparian strip membrane protein 1 from Nicotiana tabacum (Common tobacco).